We begin with the raw amino-acid sequence, 285 residues long: 3-methyl-2-oxobutanoate hydroxymethyltransferase (285 aa).

Residues 1–23 (MSEHNVYGAAQPAQPAQPAQPRT) form a disordered region. Residues 9–21 (AAQPAQPAQPAQP) show a composition bias toward low complexity. Mg(2+)-binding residues include Asp66 and Asp105. 3-methyl-2-oxobutanoate-binding positions include 66-67 (DS), Asp105, and Lys135. Residue Glu137 coordinates Mg(2+). Glu203 acts as the Proton acceptor in catalysis.

This sequence belongs to the PanB family. In terms of assembly, homodecamer; pentamer of dimers. The cofactor is Mg(2+).

The protein resides in the cytoplasm. The enzyme catalyses 3-methyl-2-oxobutanoate + (6R)-5,10-methylene-5,6,7,8-tetrahydrofolate + H2O = 2-dehydropantoate + (6S)-5,6,7,8-tetrahydrofolate. It functions in the pathway cofactor biosynthesis; (R)-pantothenate biosynthesis; (R)-pantoate from 3-methyl-2-oxobutanoate: step 1/2. Catalyzes the reversible reaction in which hydroxymethyl group from 5,10-methylenetetrahydrofolate is transferred onto alpha-ketoisovalerate to form ketopantoate. This chain is 3-methyl-2-oxobutanoate hydroxymethyltransferase, found in Mycobacterium avium (strain 104).